The chain runs to 946 residues: MDAGFFRGTSAEQDNRFSNKQKKLLKQLKFAECLEKKVDMSKVNLEVIKPWITKRVTEILGFEDDVVIEFIFNQLEVKNPDSKMMQINLTGFLNGKNAREFMGELWPLLLSAQENIAGIPSAFLELKKEEIKQRQIEQEKLASLKKQDEDKDKRDKEEKESSREKRERSRSPRRRKSRSPSPRRRSSPVRRERKRSHSRSPRHRTKSRSPSPAPEKKEKSPELPEPSVRMKDSSVQEATSTSDILKAPKPEPVPEPKEPSPEKNSKKEKEKTRPRSRSRSKSRSRTRSRSPSHTRPRRRHRSRSRSYSPRRRPSPRRRPSPRRRTPPRRMPPPPRHRRSRSPGRRRRRSSASLSGSSSSSSSSRSRSPPKKPPKRTSSPPRKTRRLSPSASPPRRRHRPSSPATPPPKTRHSPTPQQSNRTRKSRVSVSPGRTSGKVTKHKGTEKRESPSPAPKPRKVELSESEEDKGSKMAAADSVQQRRQYRRQNQQSSSDSGSSSTSEDERPKRSHVKNGEVGRRRRHSPSRSASPSPRKRQKETSPRMQMGKRWQSPVTKSSRRRRSPSPPPARRRRSPSPAPPPPPPPPPPRRRRSPTPPPRRRTPSPPPRRRSPSPRRYSPPIQRRYSPSPPPKRRTASPPPPPKRRASPSPPPKRRVSHSPPPKQRSPTVTKRRSPSLSSKHRKGSSPGRSTREARSPQPNKRHSPSPRPRAPQTSSPPPVRRGASASPQGRQSPSPSTRPIRRVSRTPEPKKIKKTAMATQRNIRRVSKSPKADSLSRAASPSPQSVRRVSSSRSVSGSPEPAAKKPPAPPSPVQSQSPSTNWSPAVPAKKAKSPTPSLSPARNSDQEGGGKKKKKKKDKKHKKDKKHKKHKKHKKEKAVTIATPATAAPAAVSAATTTSAQEEPAAAPEPRKETESEAEDDNLDDLERHLREKALRSMRKAQVSPQS.

Met1 carries the post-translational modification N-acetylmethionine. The tract at residues 1–151 (MDAGFFRGTS…ASLKKQDEDK (151 aa)) is necessary for DNA and RNA-binding. The segment at 1 to 156 (MDAGFFRGTS…QDEDKDKRDK (156 aa)) is necessary for mRNA 3'-end cleavage and cytoplasmic accumulation. At Arg7 the chain carries Citrulline. In terms of domain architecture, PWI spans 27–126 (QLKFAECLEK…AGIPSAFLEL (100 aa)). Lys127 is covalently cross-linked (Glycyl lysine isopeptide (Lys-Gly) (interchain with G-Cter in SUMO2)). An N6-acetyllysine modification is found at Lys140. Over residues 142 to 170 (ASLKKQDEDKDKRDKEEKESSREKRERSR) the composition is skewed to basic and acidic residues. The disordered stretch occupies residues 142–946 (ASLKKQDEDK…MRKAQVSPQS (805 aa)). Residues 171–207 (SPRRRKSRSPSPRRRSSPVRRERKRSHSRSPRHRTKS) show a composition bias toward basic residues. Residues 214 to 234 (PEKKEKSPELPEPSVRMKDSS) show a composition bias toward basic and acidic residues. Phosphoserine is present on residues Ser220 and Ser227. Residue Lys231 forms a Glycyl lysine isopeptide (Lys-Gly) (interchain with G-Cter in SUMO1); alternate linkage. Lys231 participates in a covalent cross-link: Glycyl lysine isopeptide (Lys-Gly) (interchain with G-Cter in SUMO2); alternate. Phosphoserine is present on residues Ser234 and Ser240. Phosphothreonine is present on Thr241. A compositionally biased stretch (basic and acidic residues) spans 246 to 273 (KAPKPEPVPEPKEPSPEKNSKKEKEKTR). Lys249 is covalently cross-linked (Glycyl lysine isopeptide (Lys-Gly) (interchain with G-Cter in SUMO2)). Ser260 bears the Phosphoserine mark. 2 stretches are compositionally biased toward basic residues: residues 274–327 (PRSR…RTPP) and 334–349 (PRHR…RRRS). The necessary for speckles and matrix localization stretch occupies residues 298 to 707 (RRHRSRSRSY…NKRHSPSPRP (410 aa)). Over residues 350–366 (SASLSGSSSSSSSSRSR) the composition is skewed to low complexity. A phosphoserine mark is found at Ser387, Ser389, Ser391, and Ser400. Thr404 carries the phosphothreonine modification. Ser412 carries the post-translational modification Phosphoserine. Thr414 carries the post-translational modification Phosphothreonine. Residues Ser418, Ser427, Ser429, and Ser434 each carry the phosphoserine modification. The segment covering 426–436 (VSVSPGRTSGK) has biased composition (polar residues). A Glycyl lysine isopeptide (Lys-Gly) (interchain with G-Cter in SUMO2) cross-link involves residue Lys445. Residues Ser448 and Ser450 each carry the phosphoserine modification. Residue Lys457 forms a Glycyl lysine isopeptide (Lys-Gly) (interchain with G-Cter in SUMO2) linkage. A phosphoserine mark is found at Ser461 and Ser463. Lys470 is covalently cross-linked (Glycyl lysine isopeptide (Lys-Gly) (interchain with G-Cter in SUMO2)). Ser476 carries the phosphoserine modification. Low complexity predominate over residues 476–499 (SVQQRRQYRRQNQQSSSDSGSSST). The span at 501-516 (EDERPKRSHVKNGEVG) shows a compositional bias: basic and acidic residues. Phosphoserine is present on residues Ser522, Ser524, Ser526, Ser528, Ser530, Ser561, Ser563, Ser572, and Ser574. Positions 555 to 572 (SSRRRRSPSPPPARRRRS) are enriched in basic residues. Residues 574-585 (SPAPPPPPPPPP) show a composition bias toward pro residues. Positions 586–611 (PRRRRSPTPPPRRRTPSPPPRRRSPS) are enriched in basic residues. Residues Thr593 and Thr600 each carry the phosphothreonine modification. At Ser602 the chain carries Phosphoserine. The span at 612–624 (PRRYSPPIQRRYS) shows a compositional bias: low complexity. A Phosphotyrosine modification is found at Tyr615. Residues Ser616, Ser624, and Ser626 each carry the phosphoserine modification. Thr633 is subject to Phosphothreonine. Phosphoserine is present on residues Ser635, Ser645, Ser647, Ser655, and Ser657. Over residues 640-655 (PKRRASPSPPPKRRVS) the composition is skewed to basic residues. Residues 668-682 (TKRRSPSLSSKHRKG) are compositionally biased toward basic residues. The span at 704-718 (SPRPRAPQTSSPPPV) shows a compositional bias: pro residues. Residues Ser713, Ser714, Ser723, Ser725, Ser731, and Ser733 each carry the phosphoserine modification. Residues 724 to 736 (ASPQGRQSPSPST) are compositionally biased toward polar residues. At Thr736 the chain carries Phosphothreonine. A phosphoserine mark is found at Ser779, Ser781, Ser789, Ser793, Ser795, Ser797, Ser810, Ser814, Ser816, and Ser818. A compositionally biased stretch (low complexity) spans 779-800 (SPSPQSVRRVSSSRSVSGSPEP). The residue at position 819 (Thr819) is a Phosphothreonine. Ser822 and Ser832 each carry phosphoserine. The span at 833–842 (PTPSLSPARN) shows a compositional bias: polar residues. Thr834 carries the post-translational modification Phosphothreonine. A phosphoserine mark is found at Ser836, Ser838, and Ser843. A compositionally biased stretch (basic residues) spans 850-875 (KKKKKKKDKKHKKDKKHKKHKKHKKE). Residues 878–907 (VTIATPATAAPAAVSAATTTSAQEEPAAAP) show a composition bias toward low complexity. Phosphothreonine is present on Thr913. Ser915 is modified (phosphoserine). Basic and acidic residues predominate over residues 924 to 934 (DLERHLREKAL). Ser943 carries the phosphoserine modification.

The protein belongs to the splicing factor SR family. In terms of assembly, identified in the spliceosome C complex. Found in a pre-mRNA splicing complex with SFRS4, SFRS5, SNRP70, SNRPA1, SRRM1 and SRRM2. Component of the minor spliceosome, which splices U12-type introns. Found in a pre-mRNA exonic splicing enhancer (ESE) complex with SNRP70, SNRPA1, SRRM1 and TRA2B/SFRS10. Found in a mRNA splicing-dependent exon junction complex (EJC) with DEK, PRPF8, NCBP1, RBM8A, RNPS1, SRRM1 and ALYREF/THOC4. Interacts with DDX39B, CPSF1, RBM8A, RNPS1, and ALYREF/THOC4. Seems to be a compound of RNA export complexes that are released from speckles in a ATP-dependent manner. Post-translationally, citrullinated by PADI4. In terms of processing, phosphorylated on multiple serine and threonine residues by DYRK3 during the G2-to-M transition, after the nuclear-envelope breakdown. Phosphorylation by DYRK3 promotes disassembly of nuclear speckles.

Its subcellular location is the nucleus matrix. The protein resides in the nucleus speckle. Part of pre- and post-splicing multiprotein mRNP complexes. As a component of the minor spliceosome, involved in the splicing of U12-type introns in pre-mRNAs. Involved in numerous pre-mRNA processing events. Promotes constitutive and exonic splicing enhancer (ESE)-dependent splicing activation by bridging together sequence-specific (SR family proteins, SFRS4, SFRS5 and TRA2B/SFRS10) and basal snRNP (SNRP70 and SNRPA1) factors of the spliceosome. Stimulates mRNA 3'-end cleavage independently of the formation of an exon junction complex. Binds both pre-mRNA and spliced mRNA 20-25 nt upstream of exon-exon junctions. Binds RNA and DNA with low sequence specificity and has similar preference for either double- or single-stranded nucleic acid substrates. The protein is Serine/arginine repetitive matrix protein 1 (Srrm1) of Mus musculus (Mouse).